The primary structure comprises 555 residues: MIWVAVVITMLLFILVAKPTGIYLEKAFQGSKKLDKVFGPFEKLIFKITGVKEYNQTWKQYALSLVLLNGFMIVVVYFIFRLQGVLPLNPAHIEGMEPTLAFNTAISFMTDTNLQHYSGENGLSYLSQLIGITFLMFAAPATTLALVMAFIRGLAGKELGNFFVDFTRALTRVFLPIAFVTALVFVALGVPQTLDGAVTAQTIDGVKQSIVRGPVASFVSIKELGNNGGGFFGTNSTHPFENPGQMSNILQMMLMMLLPTALPFTYGRMVGNKKQGRILFVSLFMVFLLGFITITTSELNGNPALNAMGIEHVQGSTEGKEVRFGTVFSSLYATVTTAAETGAVNTMHDTLTPIGGLVPLVNMMLNTVYGGVGAGFVNIIMYAIIAVFISGLMVGRTPEFLGKKIEGKEMKLIAVTILFHPLLILGFSALALSTSLGTDAISNLGFHGLTQVVYEYTSSAVNNGSGFEGLGDATTFWNITTGLVMFLGRYFSLVTMLAVAASLKEKTVVPETVGTFRTDNGLFGGIFIGTIVIVGALTFFPMLVLGPIAEFLTLK.

10 helical membrane-spanning segments follow: residues 2–22 (IWVAVVITMLLFILVAKPTGI), 60–80 (QYALSLVLLNGFMIVVVYFIF), 130–150 (IGITFLMFAAPATTLALVMAF), 173–193 (VFLPIAFVTALVFVALGVPQT), 246–266 (MSNILQMMLMMLLPTALPFTY), 278–298 (ILFVSLFMVFLLGFITITTSE), 374–394 (AGFVNIIMYAIIAVFISGLMV), 412–432 (LIAVTILFHPLLILGFSALAL), 483–503 (LVMFLGRYFSLVTMLAVAASL), and 525–545 (GIFIGTIVIVGALTFFPMLVL).

Belongs to the KdpA family. As to quaternary structure, the system is composed of three essential subunits: KdpA, KdpB and KdpC.

The protein resides in the cell membrane. Functionally, part of the high-affinity ATP-driven potassium transport (or Kdp) system, which catalyzes the hydrolysis of ATP coupled with the electrogenic transport of potassium into the cytoplasm. This subunit binds the extracellular potassium ions and delivers the ions to the membrane domain of KdpB through an intramembrane tunnel. The chain is Potassium-transporting ATPase potassium-binding subunit from Bacillus cereus (strain AH820).